The chain runs to 119 residues: Holo-[acyl-carrier-protein] synthase (119 aa).

Positions 8 and 59 each coordinate Mg(2+).

This sequence belongs to the P-Pant transferase superfamily. AcpS family. Mg(2+) serves as cofactor.

It localises to the cytoplasm. The enzyme catalyses apo-[ACP] + CoA = holo-[ACP] + adenosine 3',5'-bisphosphate + H(+). Functionally, transfers the 4'-phosphopantetheine moiety from coenzyme A to a Ser of acyl-carrier-protein. This Streptococcus agalactiae serotype Ia (strain ATCC 27591 / A909 / CDC SS700) protein is Holo-[acyl-carrier-protein] synthase.